A 76-amino-acid polypeptide reads, in one-letter code: MSEYFISRTSIWTVFMLPIMYGPIKSMIEISRSSYNVSVIVNTPIGVITNAASMAAYVNDLLLIHFLLSLVEFFNT.

This is an uncharacterized protein from Homo sapiens (Human).